Reading from the N-terminus, the 189-residue chain is GMP synthase [glutamine-hydrolyzing] subunit A (189 aa).

A Glutamine amidotransferase type-1 domain is found at 1–189 (MIVILNNGGQ…CKKCGFEFEE (189 aa)). Cysteine 76 (nucleophile) is an active-site residue. Residues histidine 163 and glutamate 165 contribute to the active site.

In terms of assembly, heterodimer composed of a glutamine amidotransferase subunit (A) and a GMP-binding subunit (B).

The enzyme catalyses XMP + L-glutamine + ATP + H2O = GMP + L-glutamate + AMP + diphosphate + 2 H(+). The protein operates within purine metabolism; GMP biosynthesis; GMP from XMP (L-Gln route): step 1/1. Functionally, catalyzes the synthesis of GMP from XMP. The sequence is that of GMP synthase [glutamine-hydrolyzing] subunit A from Methanococcus maripaludis (strain C7 / ATCC BAA-1331).